A 740-amino-acid chain; its full sequence is Catalase-peroxidase 2 (740 aa).

An N-terminal signal peptide occupies residues 1–27; sequence MFKKTKPRISILALTISCAIYSGAALA. The segment at residues 106 to 228 is a cross-link (tryptophyl-tyrosyl-methioninium (Trp-Tyr) (with M-254)); sequence WHSAGTYRIY…LAAVQMGLIY (123 aa). Residue His107 is the Proton acceptor of the active site. Residues 228–254 constitute a cross-link (tryptophyl-tyrosyl-methioninium (Tyr-Met) (with W-106)); the sequence is YVNPEGPNGVPDPLLAAKDIRDTFGRM. His269 provides a ligand contact to heme b.

The protein belongs to the peroxidase family. Peroxidase/catalase subfamily. As to quaternary structure, homodimer or homotetramer. Requires heme b as cofactor. Post-translationally, formation of the three residue Trp-Tyr-Met cross-link is important for the catalase, but not the peroxidase activity of the enzyme.

It carries out the reaction H2O2 + AH2 = A + 2 H2O. The enzyme catalyses 2 H2O2 = O2 + 2 H2O. Its function is as follows. Bifunctional enzyme with both catalase and broad-spectrum peroxidase activity. This chain is Catalase-peroxidase 2, found in Cellvibrio japonicus (strain Ueda107) (Pseudomonas fluorescens subsp. cellulosa).